Consider the following 531-residue polypeptide: MELTLWTYEGPPHIGAMRIASSMKGVHYVLHAPQGDTYADLLFTMIERRGQRPPVTYTTFQARDLGGDTAELVKGHIREAVDRFKPEALLVGESCTAELIQDQPGSLAKGMGYEIPIISLELPAYSKKENWGAAETFYQLVRGLLKDSPKSESEHNPSKWKTEGRRPRVNLLGPSLLGFRCRDDVLEVQKILAHHGIDINVVAPLGAAPADIIRINEADANICLYPEIAESTCIWLERNFGHPYTKTIPIGVGATNDFLNEIHQLLGMELPKQEEEDGSQSRLTWYSKSVDSNYLTGKRVFIFGDGTHVLAASRIAHKELGFEVVGLGTYSREMARKVRDAAKELGLEALITNDYLAVEEAIKESAPELVLGTQMERHSAKRLGIPCAVISTPMHVQDVPARYSPQMGWEGANVIFDDWVHPLMMGLEEHLIGMFRHDFEFTDGHQSHLGHLGGHSTEKETKAPSFYQEKVQSSRPEHFPHWTPEGESELAKIPFFVRGKVRKNTEKYANQIGCKEIDGETLLDAKAHFNA.

Asp-36 serves as a coordination point for [4Fe-4S] cluster. Asp-291 functions as the Proton donor in the catalytic mechanism. Position 426-427 (426-427 (GL)) interacts with substrate.

The protein belongs to the ChlB/BchB/BchZ family. Protochlorophyllide reductase is composed of three subunits; ChlL, ChlN and ChlB. Forms a heterotetramer of two ChlB and two ChlN subunits. [4Fe-4S] cluster is required as a cofactor.

It carries out the reaction chlorophyllide a + oxidized 2[4Fe-4S]-[ferredoxin] + 2 ADP + 2 phosphate = protochlorophyllide a + reduced 2[4Fe-4S]-[ferredoxin] + 2 ATP + 2 H2O. Its pathway is porphyrin-containing compound metabolism; chlorophyll biosynthesis (light-independent). Functionally, component of the dark-operative protochlorophyllide reductase (DPOR) that uses Mg-ATP and reduced ferredoxin to reduce ring D of protochlorophyllide (Pchlide) to form chlorophyllide a (Chlide). This reaction is light-independent. The NB-protein (ChlN-ChlB) is the catalytic component of the complex. The protein is Light-independent protochlorophyllide reductase subunit B of Prochlorococcus marinus (strain MIT 9211).